A 294-amino-acid polypeptide reads, in one-letter code: IVFRAAQTRSDIEIVAINDLLDAEYMAYMLKYDSTHGRFDGTVEVKDGHLVVNGKKIRVTAEKDPANLKWNEVGVDVVAEATGIFLTDETARKHITAGAKKVVLTGPSKDDTPMFVKGANFDKYNGQDIVSNASCTTNCLAPLAKVINDNFGIIEGLMTTVHATTATQKTVDGPSHKDWRGGRGAAQNIIPSSTGAAKAVGKVLPELNGKLTGMAFRVPTPNVSVVDLTVRLEKAASYEDIKKAIKAAAEGEMKGVLGYTEDDVVSTDFNGEVCTSVFDAKAGIALNDNFVKLV.

NAD(+) contacts are provided by Asp-19, Lys-63, and Thr-105. Residues 134–136, Thr-165, 194–195, and Arg-217 contribute to the D-glyceraldehyde 3-phosphate site; these read SCT and TG. Cys-135 functions as the Nucleophile in the catalytic mechanism.

The protein belongs to the glyceraldehyde-3-phosphate dehydrogenase family. In terms of assembly, homotetramer.

The protein localises to the cytoplasm. The enzyme catalyses D-glyceraldehyde 3-phosphate + phosphate + NAD(+) = (2R)-3-phospho-glyceroyl phosphate + NADH + H(+). Its pathway is carbohydrate degradation; glycolysis; pyruvate from D-glyceraldehyde 3-phosphate: step 1/5. Its function is as follows. Catalyzes the oxidative phosphorylation of glyceraldehyde 3-phosphate (G3P) to 1,3-bisphosphoglycerate (BPG) using the cofactor NAD. The first reaction step involves the formation of a hemiacetal intermediate between G3P and a cysteine residue, and this hemiacetal intermediate is then oxidized to a thioester, with concomitant reduction of NAD to NADH. The reduced NADH is then exchanged with the second NAD, and the thioester is attacked by a nucleophilic inorganic phosphate to produce BPG. In Atlantibacter hermannii (Escherichia hermannii), this protein is Glyceraldehyde-3-phosphate dehydrogenase (gap).